The chain runs to 501 residues: NAD(P)H-quinone oxidoreductase subunit 2, chloroplastic (501 aa).

The next 14 helical transmembrane spans lie at Ile15–Phe35, Thr40–Phe60, Ile82–Ile102, Met107–Cys127, Leu132–Tyr152, Leu167–Leu187, Thr212–Phe232, Pro244–Thr264, Trp278–Ile298, Leu307–Leu327, Met333–Leu353, Phe378–Gly398, Gly410–Leu430, and Phe466–Phe486.

This sequence belongs to the complex I subunit 2 family. NDH is composed of at least 16 different subunits, 5 of which are encoded in the nucleus.

It is found in the plastid. Its subcellular location is the chloroplast thylakoid membrane. The enzyme catalyses a plastoquinone + NADH + (n+1) H(+)(in) = a plastoquinol + NAD(+) + n H(+)(out). It carries out the reaction a plastoquinone + NADPH + (n+1) H(+)(in) = a plastoquinol + NADP(+) + n H(+)(out). Functionally, NDH shuttles electrons from NAD(P)H:plastoquinone, via FMN and iron-sulfur (Fe-S) centers, to quinones in the photosynthetic chain and possibly in a chloroplast respiratory chain. The immediate electron acceptor for the enzyme in this species is believed to be plastoquinone. Couples the redox reaction to proton translocation, and thus conserves the redox energy in a proton gradient. The polypeptide is NAD(P)H-quinone oxidoreductase subunit 2, chloroplastic (Marchantia polymorpha (Common liverwort)).